The following is a 593-amino-acid chain: MRALLTFFVAGLLVLSSPAMALFGNNQNSSFASGSNDFVPVDQAFPFNYFQQDHRITLDWQVKEGYYLYQQRLSFSAENVVLGDIQMENGQPYRDEFFGDVNIYTNPLFVNIPMQDWQPGAKLIVQYQGCAKAGFCYPPETRVIDITSFTNGDMAPATMPTQTANPLDTSTPQPLTQQDQLASGLADNWWTPLLFLALGVGLAFTPCVLPMYPILTSIVLGSGKLSQRRALGLSLVYVQGMALTYTLLGLVVASAGLQFQAAMQHPYVLIGLSILFVTLALSMFGVYTLQLPSSVQTWLNNLSNKQQGGSSAGVFAMGAISGLVCSPCTTAPLSGALLYVAQSGDLLTGGVALYALAMGMGIPLILVAVFGNKLLPKAGGWMDRVKTLFGFVLLAAPIFLLERILPEMWSTALWSALGIAAFGWLYHVKNSLEFGGWKQSAVGIIAVLGLFASAQPALNYWFTDSSQQTQTSEVSFIKIRNVEELQQQLALAKQAKKPVMLDFYADWCVACKEFEKYTFHDPAVAAQLKQFVLLQADVTRNQAQDIELLQAQQVLGLPTIDFWDAQGNPVSNARLTGFMQAAPFLEHIQRISN.

The signal sequence occupies residues 1-21; that stretch reads MRALLTFFVAGLLVLSSPAMA. 2 disulfides stabilise this stretch: C130–C136 and C207–C328. 8 helical membrane passes run 193–215, 235–257, 269–291, 318–340, 347–369, 384–401, 408–425, and 440–462; these read LLFL…YPIL, LVYV…SAGL, LIGL…TLQL, GAIS…LLYV, LTGG…LVAV, RVKT…IFLL, MWST…FGWL, and SAVG…NYWF. One can recognise a Thioredoxin domain in the interval 451–593; it reads FASAQPALNY…FLEHIQRISN (143 aa). C508 and C511 form a disulfide bridge.

This sequence belongs to the thioredoxin family. DsbD subfamily.

Its subcellular location is the cell inner membrane. It catalyses the reaction [protein]-dithiol + NAD(+) = [protein]-disulfide + NADH + H(+). It carries out the reaction [protein]-dithiol + NADP(+) = [protein]-disulfide + NADPH + H(+). Its function is as follows. Required to facilitate the formation of correct disulfide bonds in some periplasmic proteins and for the assembly of the periplasmic c-type cytochromes. Acts by transferring electrons from cytoplasmic thioredoxin to the periplasm. This transfer involves a cascade of disulfide bond formation and reduction steps. The chain is Thiol:disulfide interchange protein DsbD from Vibrio vulnificus (strain CMCP6).